Here is a 173-residue protein sequence, read N- to C-terminus: MRRAFYIGRFQPFHLGHYSLIKDIARDADEVVIGIGSAQKSHEPKNPFTAGERVMMIKHALEDAGIKHYAIPLEDLQRNAVWVSHIISMTPPFDVVYSNNPLVVRLFQESGILVEQPPMYQREGYSGSEIRKRMLRGEDWKSLVPAAVIDVIDEIDGVNRLKSVSKSDKDYRD.

The protein belongs to the archaeal NMN adenylyltransferase family.

It localises to the cytoplasm. It catalyses the reaction beta-nicotinamide D-ribonucleotide + ATP + H(+) = diphosphate + NAD(+). It functions in the pathway cofactor biosynthesis; NAD(+) biosynthesis; NAD(+) from nicotinamide D-ribonucleotide: step 1/1. The sequence is that of Nicotinamide-nucleotide adenylyltransferase (ffdC) from Methanolobus tindarius.